The primary structure comprises 443 residues: tRNA(Ile2) 2-agmatinylcytidine synthetase TiaS (443 aa).

It belongs to the TiaS family.

Its subcellular location is the cytoplasm. The enzyme catalyses cytidine(34) in tRNA(Ile2) + agmatine + ATP + H2O = 2-agmatinylcytidine(34) in tRNA(Ile2) + AMP + 2 phosphate + 2 H(+). Its function is as follows. ATP-dependent agmatine transferase that catalyzes the formation of 2-agmatinylcytidine (agm2C) at the wobble position (C34) of tRNA(Ile2), converting the codon specificity from AUG to AUA. The protein is tRNA(Ile2) 2-agmatinylcytidine synthetase TiaS of Saccharolobus islandicus (strain L.S.2.15 / Lassen #1) (Sulfolobus islandicus).